We begin with the raw amino-acid sequence, 184 residues long: Putative manganese efflux pump MntP (184 aa).

6 helical membrane passes run 12–32, 39–59, 63–83, 99–119, 132–152, and 164–184; these read SIMA…MGMI, IIYI…FGML, LLSG…LLVL, FIAP…LDSF, VWMT…LGLL, and YSGA…LFPL.

It belongs to the MntP (TC 9.B.29) family.

Its subcellular location is the cell membrane. In terms of biological role, probably functions as a manganese efflux pump. The chain is Putative manganese efflux pump MntP from Bacillus pumilus (strain SAFR-032).